We begin with the raw amino-acid sequence, 157 residues long: Endoribonuclease YbeY (157 aa).

Zn(2+) contacts are provided by His114, His118, and His124.

This sequence belongs to the endoribonuclease YbeY family. Zn(2+) is required as a cofactor.

Its subcellular location is the cytoplasm. In terms of biological role, single strand-specific metallo-endoribonuclease involved in late-stage 70S ribosome quality control and in maturation of the 3' terminus of the 16S rRNA. This chain is Endoribonuclease YbeY, found in Salmonella dublin (strain CT_02021853).